Here is a 145-residue protein sequence, read N- to C-terminus: Large ribosomal subunit protein uL13 (145 aa).

Belongs to the universal ribosomal protein uL13 family. Part of the 50S ribosomal subunit.

Functionally, this protein is one of the early assembly proteins of the 50S ribosomal subunit, although it is not seen to bind rRNA by itself. It is important during the early stages of 50S assembly. This is Large ribosomal subunit protein uL13 from Haloquadratum walsbyi (strain DSM 16790 / HBSQ001).